We begin with the raw amino-acid sequence, 751 residues long: Catalase-peroxidase (751 aa).

The disordered stretch occupies residues 1–21; that stretch reads MSNESKCPFHQTAGGGTTNRD. The tryptophyl-tyrosyl-methioninium (Trp-Tyr) (with M-270) cross-link spans 90 to 244; sequence WHSAGTYRIG…LAAVQMGLIY (155 aa). The Proton acceptor role is filled by histidine 91. Positions 195–227 are disordered; it reads YGKDQVKAQPPGQGDLVAEPAKHGEEQNRDLSA. Basic and acidic residues predominate over residues 214–227; the sequence is PAKHGEEQNRDLSA. A cross-link (tryptophyl-tyrosyl-methioninium (Tyr-Met) (with W-90)) is located at residues 244-270; that stretch reads YVNPEGPEGNPDPVASGKDIRETFGRM. Histidine 285 is a heme b binding site. Residues 364 to 385 are disordered; the sequence is GAHQWRPKDGKGAGTVPDAHDP.

It belongs to the peroxidase family. Peroxidase/catalase subfamily. As to quaternary structure, homodimer or homotetramer. It depends on heme b as a cofactor. In terms of processing, formation of the three residue Trp-Tyr-Met cross-link is important for the catalase, but not the peroxidase activity of the enzyme.

The enzyme catalyses H2O2 + AH2 = A + 2 H2O. It carries out the reaction 2 H2O2 = O2 + 2 H2O. Bifunctional enzyme with both catalase and broad-spectrum peroxidase activity. This Pseudomonas putida (strain ATCC 47054 / DSM 6125 / CFBP 8728 / NCIMB 11950 / KT2440) protein is Catalase-peroxidase.